Reading from the N-terminus, the 180-residue chain is Chorion protein S19 (180 aa).

Positions 1 to 21 (MNTFATLAVLFCACLIGNCHG) are cleaved as a signal peptide.

Belongs to the chorion protein S19 family.

Its subcellular location is the secreted. Chorion membrane (egg shell) protein; plays a role in protecting the egg from the environment. The sequence is that of Chorion protein S19 (Cp19) from Drosophila subobscura (Fruit fly).